A 500-amino-acid polypeptide reads, in one-letter code: ATP synthase subunit alpha (500 aa).

169 to 176 is a binding site for ATP; the sequence is GDRQTGKT.

The protein belongs to the ATPase alpha/beta chains family. As to quaternary structure, F-type ATPases have 2 components, CF(1) - the catalytic core - and CF(0) - the membrane proton channel. CF(1) has five subunits: alpha(3), beta(3), gamma(1), delta(1), epsilon(1). CF(0) has three main subunits: a(1), b(2) and c(9-12). The alpha and beta chains form an alternating ring which encloses part of the gamma chain. CF(1) is attached to CF(0) by a central stalk formed by the gamma and epsilon chains, while a peripheral stalk is formed by the delta and b chains.

Its subcellular location is the cell inner membrane. The catalysed reaction is ATP + H2O + 4 H(+)(in) = ADP + phosphate + 5 H(+)(out). Its function is as follows. Produces ATP from ADP in the presence of a proton gradient across the membrane. The alpha chain is a regulatory subunit. In Fusobacterium nucleatum subsp. nucleatum (strain ATCC 25586 / DSM 15643 / BCRC 10681 / CIP 101130 / JCM 8532 / KCTC 2640 / LMG 13131 / VPI 4355), this protein is ATP synthase subunit alpha.